The following is a 220-amino-acid chain: Probable glutathione S-transferase parA (220 aa).

The GST N-terminal domain occupies 4 to 83 (NNVVLLDFWP…YIDEVWHDKC (80 aa)). Glutathione is bound by residues Ser-14, Lys-41, Ile-55, and 67 to 68 (ES). A GST C-terminal domain is found at 89–209 (DPYERSQARF…LPHPHKIYGF (121 aa)).

It belongs to the GST superfamily. HSP26 family.

The catalysed reaction is RX + glutathione = an S-substituted glutathione + a halide anion + H(+). In Nicotiana tabacum (Common tobacco), this protein is Probable glutathione S-transferase parA (PARA).